The chain runs to 75 residues: UPF0270 protein PSEEN1465 (75 aa).

This sequence belongs to the UPF0270 family.

This is UPF0270 protein PSEEN1465 from Pseudomonas entomophila (strain L48).